A 132-amino-acid polypeptide reads, in one-letter code: MSMTDPIADFLTRVRNANLARHEVVEAPASKIKKSIAEILKAEGFIRDFEYIDDNKQGVIRVFLKYGEDRNRVITGIQRISKPGLRKYAKAEELPKVLNGLGIAIISTSAGVITDKEARSKQVGGEVIAYVW.

The protein belongs to the universal ribosomal protein uS8 family. In terms of assembly, part of the 30S ribosomal subunit. Contacts proteins S5 and S12.

In terms of biological role, one of the primary rRNA binding proteins, it binds directly to 16S rRNA central domain where it helps coordinate assembly of the platform of the 30S subunit. The polypeptide is Small ribosomal subunit protein uS8 (Leuconostoc mesenteroides subsp. mesenteroides (strain ATCC 8293 / DSM 20343 / BCRC 11652 / CCM 1803 / JCM 6124 / NCDO 523 / NBRC 100496 / NCIMB 8023 / NCTC 12954 / NRRL B-1118 / 37Y)).